Consider the following 156-residue polypeptide: Small ribosomal subunit protein eS10 (156 aa).

Residues 91–156 (LKRQTRPEAA…FGRGRQEQEE (66 aa)) form a disordered region. Residues 95 to 119 (TRPEAARPRPKEGAPRAQVGEDRAG) are compositionally biased toward basic and acidic residues.

This sequence belongs to the eukaryotic ribosomal protein eS10 family.

It is found in the cytoplasm. This chain is Small ribosomal subunit protein eS10 (RPS10), found in Lumbricus rubellus (Humus earthworm).